Consider the following 323-residue polypeptide: Aldo-keto reductase family 1 member C4 (323 aa).

NADP(+) is bound by residues 20-24 (GFGSY) and Asp50. Tyr55 functions as the Proton donor in the catalytic mechanism. Residue His117 coordinates substrate. NADP(+) contacts are provided by residues 166–167 (SN), Gln190, 216–221 (HSALGT), and 270–280 (KSYNEQRIREN).

This sequence belongs to the aldo/keto reductase family. In terms of assembly, monomer. High expression in liver. Also expressed in kidney.

The protein localises to the cytoplasm. It localises to the cytosol. It catalyses the reaction chlordecone alcohol + NADP(+) = chlordecone + NADPH + H(+). It carries out the reaction a 3alpha-hydroxysteroid + NADP(+) = a 3-oxosteroid + NADPH + H(+). The enzyme catalyses a 3alpha-hydroxysteroid + NAD(+) = a 3-oxosteroid + NADH + H(+). The catalysed reaction is 5alpha-androstane-3alpha,17beta-diol + NADP(+) = 17beta-hydroxy-5alpha-androstan-3-one + NADPH + H(+). It catalyses the reaction 5alpha-androstane-3beta,17beta-diol + NADP(+) = 17beta-hydroxy-5alpha-androstan-3-one + NADPH + H(+). It carries out the reaction 5alpha-androstane-3alpha,17beta-diol + NAD(+) = 17beta-hydroxy-5alpha-androstan-3-one + NADH + H(+). The enzyme catalyses 17beta-estradiol + NADP(+) = estrone + NADPH + H(+). The catalysed reaction is 17beta-estradiol + NAD(+) = estrone + NADH + H(+). It catalyses the reaction (20S)-hydroxypregn-4-en-3-one + NADP(+) = progesterone + NADPH + H(+). It carries out the reaction (20S)-hydroxypregn-4-en-3-one + NAD(+) = progesterone + NADH + H(+). The enzyme catalyses androsterone + NADP(+) = 5alpha-androstan-3,17-dione + NADPH + H(+). The catalysed reaction is testosterone + NADP(+) = androst-4-ene-3,17-dione + NADPH + H(+). It catalyses the reaction testosterone + NAD(+) = androst-4-ene-3,17-dione + NADH + H(+). It carries out the reaction 3alpha-hydroxy-5alpha-androstane 17-O-(beta-D-glucuronate) + NADP(+) = 5alpha-dihydrotestosterone 17-O-(beta-D-glucuronate) + NADPH + H(+). The enzyme catalyses (3beta,5alpha,17beta)-3-hydroxy-androstan-17-yl sulfate + NADP(+) = 5alpha-dihydrotestosterone sulfate + NADPH + H(+). The catalysed reaction is 5alpha-androstane-3alpha,17beta-diol + NAD(+) = androsterone + NADH + H(+). It functions in the pathway steroid metabolism. Its activity is regulated as follows. Potently inhibited by benzbromarone, 3',3'',5',5''-tetrabromophenolphthalein (TBPP) and o-cresolphthalein. Cytosolic aldo-keto reductase that catalyzes the NADH and NADPH-dependent reduction of ketosteroids to hydroxysteroids. Liver specific enzyme that acts as an NAD(P)(H)-dependent 3-, 17- and 20-ketosteroid reductase on the steroid nucleus and side chain. Displays the ability to catalyze both oxidation and reduction in vitro, but most probably acts as a reductase in vivo since the oxidase activity measured in vitro is inhibited by physiological concentration of NADPH. Acts preferentially as a 3-alpha-hydroxysteroid dehydrogenase (HSD) with a subsidiary 3-beta-HSD activity. Catalyzes efficiently the transformation of the potent androgen 5-alpha-dihydrotestosterone (5alpha-DHT or 17beta-hydroxy-5alpha-androstan-3-one) into the less active form, 5-alpha-androstan-3-alpha,17-beta-diol (3-alpha-diol). Catalyzes the reduction of estrone into 17beta-estradiol but with low efficiency. Metabolizes a broad spectrum of natural and synthetic therapeutic steroid and plays an important role in metabolism of androgens, estrogens, progestereone and conjugated steroids. Catalyzes the biotransformation of the pesticide chlordecone (kepone) to its corresponding alcohol leading to increased biliary excretion of the pesticide and concomitant reduction of its neurotoxicity since bile is the major excretory route. The chain is Aldo-keto reductase family 1 member C4 (AKR1C4) from Macaca fuscata fuscata (Japanese macaque).